A 221-amino-acid polypeptide reads, in one-letter code: Coiled-coil domain-containing protein 70 (221 aa).

Residues 129-168 (NALWEKDRNLLQEDKALWEEEKALWVEERALLEEEKALWE) adopt a coiled-coil conformation.

This Macaca fascicularis (Crab-eating macaque) protein is Coiled-coil domain-containing protein 70 (CCDC70).